The sequence spans 1355 residues: Transcription factor MAR1 (1355 aa).

Residues 23–52 constitute a DNA-binding region (zn(2)-C6 fungal-type); it reads CTICRKRKVKCDKTRPHCNQCTKTGVAHLC. Disordered regions lie at residues 586-614, 918-942, and 1221-1253; these read TTDN…KDTN, SVPS…LNQD, and PPIS…TSSL. Low complexity predominate over residues 589–603; the sequence is NTRSGPPSNSNRNGS. Polar residues predominate over residues 604–614; the sequence is ETPSVSPKDTN. The span at 918-927 shows a compositional bias: low complexity; that stretch reads SVPSSCNSSS. The span at 1225 to 1238 shows a compositional bias: polar residues; that stretch reads SAKNNMAWGTTPES.

It localises to the nucleus. Functionally, transcription factor that contributes to plasma membrane sphingolipid incorporation and membrane permeability, decreasing fluconazole accumulation. Regulates 337 genes under fluconazole stress, including several related to lipid biosynthesis pathways such as RSB1, encoding a sphingoid long-chain base efflux transporter. Associates with the promoter of RSB1 in the region containing two 5'-CCCCTCC-3' motifs and increases its promoter occupancy upon fluconazole stress. This chain is Transcription factor MAR1, found in Candida glabrata (strain ATCC 2001 / BCRC 20586 / JCM 3761 / NBRC 0622 / NRRL Y-65 / CBS 138) (Yeast).